Consider the following 150-residue polypeptide: Profilin (150 aa).

This sequence belongs to the profilin family. As to quaternary structure, occurs in many kinds of cells as a complex with monomeric actin in a 1:1 ratio.

Its subcellular location is the cytoplasm. It localises to the cytoskeleton. In terms of biological role, binds to actin and affects the structure of the cytoskeleton. At high concentrations, profilin prevents the polymerization of actin, whereas it enhances it at low concentrations. By binding to PIP2, it inhibits the formation of IP3 and DG. This Trypanosoma brucei brucei protein is Profilin.